Here is a 200-residue protein sequence, read N- to C-terminus: Adenine phosphoribosyltransferase (200 aa).

Belongs to the purine/pyrimidine phosphoribosyltransferase family. As to quaternary structure, homodimer.

It is found in the cytoplasm. It carries out the reaction AMP + diphosphate = 5-phospho-alpha-D-ribose 1-diphosphate + adenine. The protein operates within purine metabolism; AMP biosynthesis via salvage pathway; AMP from adenine: step 1/1. Functionally, catalyzes a salvage reaction resulting in the formation of AMP, that is energically less costly than de novo synthesis. This is Adenine phosphoribosyltransferase from Sorangium cellulosum (strain So ce56) (Polyangium cellulosum (strain So ce56)).